Consider the following 296-residue polypeptide: GTPase Era (296 aa).

The Era-type G domain occupies 7 to 174 (HCGFVAIVGR…LDQVRPHLPE (168 aa)). A G1 region spans residues 15–22 (GRPNVGKS). A GTP-binding site is contributed by 15–22 (GRPNVGKS). Residues 41 to 45 (QTTRH) form a G2 region. The tract at residues 62-65 (DTPG) is G3. Residues 62-66 (DTPGF) and 123-126 (NKLD) each bind GTP. The tract at residues 123–126 (NKLD) is G4. Residues 153-155 (VSA) are G5. A KH type-2 domain is found at 205 to 281 (LGEELPYEMN…FLQVWVKVKS (77 aa)).

This sequence belongs to the TRAFAC class TrmE-Era-EngA-EngB-Septin-like GTPase superfamily. Era GTPase family. As to quaternary structure, monomer.

The protein resides in the cytoplasm. It is found in the cell inner membrane. Its function is as follows. An essential GTPase that binds both GDP and GTP, with rapid nucleotide exchange. Plays a role in 16S rRNA processing and 30S ribosomal subunit biogenesis and possibly also in cell cycle regulation and energy metabolism. The protein is GTPase Era of Chromobacterium violaceum (strain ATCC 12472 / DSM 30191 / JCM 1249 / CCUG 213 / NBRC 12614 / NCIMB 9131 / NCTC 9757 / MK).